Here is a 381-residue protein sequence, read N- to C-terminus: 40-kDa huntingtin-associated protein (381 aa).

Position 2 is an N-acetylalanine (Ala-2). A Nuclear localization signal motif is present at residues Lys-34–Arg-36. Residues Glu-213–Gly-260 form a disordered region. Residues Pro-218–Ser-230 show a composition bias toward low complexity. Pro residues predominate over residues Val-231 to Arg-242.

Interacts with HTT (via C-terminus). Interacts with RAB5A. Found in a complex with F8A1/F8A2/F8A3, HTT and RAB5A; mediates the recruitment of HTT by RAB5A onto early endosomes.

The protein localises to the cytoplasm. It is found in the nucleus. Its subcellular location is the early endosome. It localises to the nuclear body. Its function is as follows. RAB5A effector molecule that is involved in vesicular trafficking of early endosomes. Mediates the recruitment of HTT by RAB5A onto early endosomes. The HTT-F8A1/F8A2/F8A3-RAB5A complex stimulates early endosomal interaction with actin filaments and inhibits interaction with microtubules, leading to the reduction of endosome motility. In Rattus norvegicus (Rat), this protein is 40-kDa huntingtin-associated protein (F8a1).